Reading from the N-terminus, the 509-residue chain is H/ACA ribonucleoprotein complex subunit DKC1 (509 aa).

The interval 1–25 is disordered; that stretch reads MADAEAAMTFPKKHKKKKERKPLPE. The residue at position 2 (alanine 2) is an N-acetylalanine. Residues 2-22 form a nucleolar localization region; that stretch reads ADAEAAMTFPKKHKKKKERKP. A compositionally biased stretch (basic residues) spans 11–20; the sequence is PKKHKKKKER. Glycyl lysine isopeptide (Lys-Gly) (interchain with G-Cter in SUMO2) cross-links involve residues lysine 21, lysine 40, and lysine 44. Aspartate 126 (nucleophile) is an active-site residue. Residue lysine 192 forms a Glycyl lysine isopeptide (Lys-Gly) (interchain with G-Cter in SUMO2) linkage. Residues 297–372 enclose the PUA domain; sequence HKRLVMKDSA…VVAKIKRVIM (76 aa). The segment at 381 to 509 is disordered; sequence WGLGPKASQK…KARAAEELSG (129 aa). A Phosphoserine modification is found at serine 388. Residues lysine 395 and lysine 425 each participate in a glycyl lysine isopeptide (Lys-Gly) (interchain with G-Cter in SUMO2) cross-link. Residues 416-425 show a composition bias toward basic and acidic residues; it reads DYVDYSDSSK. The tract at residues 447–509 is nuclear and nucleolar localization; that stretch reads KRKRDSDSDA…KARAAEELSG (63 aa). Phosphoserine is present on residues serine 452 and serine 454. A Phosphothreonine modification is found at threonine 460. The span at 466-475 shows a compositional bias: basic residues; that stretch reads RVKKEKKKKK. A compositionally biased stretch (acidic residues) spans 481 to 490; that stretch reads GEEAAEDGDG. Position 508 is a phosphoserine (serine 508).

Belongs to the pseudouridine synthase TruB family. As to quaternary structure, part of the H/ACA small nucleolar ribonucleoprotein (H/ACA snoRNP) complex, which contains NHP2/NOLA2, GAR1/NOLA1, NOP10/NOLA3, and DKC1/NOLA4, which is presumed to be the catalytic subunit. The complex contains a stable core formed by binding of one or two NOP10-DKC1 heterodimers to NHP2; GAR1 subsequently binds to this core via DKC1. The complex binds a box H/ACA small nucleolar RNA (snoRNA), which may target the specific site of modification within the RNA substrate. During assembly, the complex contains NAF1 instead of GAR1/NOLA1. The complex also interacts with TERC, which contains a 3'-terminal domain related to the box H/ACA snoRNAs. Specific interactions with snoRNAs or TERC are mediated by GAR1 and NHP2. Associates with NOLC1/NOPP140. H/ACA snoRNPs interact with the SMN complex, consisting of SMN1 or SMN2, GEMIN2/SIP1, DDX20/GEMIN3, and GEMIN4. This is mediated by interaction between GAR1 and SMN1 or SMN2. The SMN complex may be required for correct assembly of the H/ACA snoRNP complex. Component of the telomerase holoenzyme complex composed of one molecule of TERT, one molecule of WRAP53/TCAB1, two molecules of H/ACA ribonucleoprotein complex subunits DKC1, NOP10, NHP2 and GAR1, and a telomerase RNA template component (TERC). The telomerase holoenzyme complex is associated with TEP1, SMG6/EST1A and POT1. Interacts with SHQ1; this interaction may lead to the stabilization of DKC1, from the time of its synthesis until its association with NOP10, NHP2, and NAF1 at the nascent H/ACA RNA. Interacts with HMBOX1. Interacts with DHX36.

It localises to the nucleus. The protein localises to the nucleolus. The protein resides in the cajal body. It catalyses the reaction uridine in 5S rRNA = pseudouridine in 5S rRNA. Its function is as follows. Catalytic subunit of H/ACA small nucleolar ribonucleoprotein (H/ACA snoRNP) complex, which catalyzes pseudouridylation of rRNA. This involves the isomerization of uridine such that the ribose is subsequently attached to C5, instead of the normal N1. Each rRNA can contain up to 100 pseudouridine ('psi') residues, which may serve to stabilize the conformation of rRNAs. Required for ribosome biogenesis and telomere maintenance. Also required for correct processing or intranuclear trafficking of TERC, the RNA component of the telomerase reverse transcriptase (TERT) holoenzyme. The polypeptide is H/ACA ribonucleoprotein complex subunit DKC1 (Dkc1) (Rattus norvegicus (Rat)).